The chain runs to 600 residues: Torsin-1A-interacting protein 1 (600 aa).

Positions 1 to 14 are enriched in basic and acidic residues; that stretch reads MAGEGQRAEPEREG. Disordered stretches follow at residues 1–261 and 310–346; these read MAGE…YKES and MRSI…QPKS. The Nuclear segment spans residues 1–354; that stretch reads MAGEGQRAEP…KSVSSVKTKR (354 aa). Residue Ser-61 is modified to Phosphoserine. 3 stretches are compositionally biased toward basic and acidic residues: residues 71 to 81, 91 to 102, and 116 to 125; these read FEPRAAKEKAR, FRPDSAKEEVRE, and RLHEAEEMQT. Ser-137, Ser-145, Ser-156, Ser-158, Ser-159, and Ser-189 each carry phosphoserine. Over residues 192–203 the composition is skewed to low complexity; sequence PLISLRRPPLRS. A compositionally biased stretch (acidic residues) spans 219 to 232; sequence EEGETEENDQDSFD. Thr-223 is subject to Phosphothreonine. Residues Ser-230, Ser-233, and Ser-244 each carry the phosphoserine modification. Residues 247 to 261 show a composition bias toward polar residues; that stretch reads SGDQTTRSSSQYKES. Ser-322 carries the phosphoserine modification. Lys-325 is covalently cross-linked (Glycyl lysine isopeptide (Lys-Gly) (interchain with G-Cter in SUMO2)). Over residues 325–346 the composition is skewed to polar residues; the sequence is KSELGNQSPSTSNQQMTGQPKS. Ser-332 is modified (phosphoserine). The chain crosses the membrane as a helical span at residues 355–371; the sequence is YWPFAVIAALLIGGFLY. The Perinuclear space portion of the chain corresponds to 372–600; sequence TRPPEAETTA…ENDLKKGICL (229 aa). Positions 373 to 600 are interaction with TOR1A; it reads RPPEAETTAV…ENDLKKGICL (228 aa). Residues 376-452 adopt a coiled-coil conformation; that stretch reads EAETTAVQEF…SEQIADAYSS (77 aa). A glycan (N-linked (GlcNAc...) asparagine) is linked at Asn-416.

Belongs to the TOR1AIP family. In terms of assembly, interacts with ATP1B4. Interacts with TOR1A (ATP-bound). Interacts with TOR1B, TOR2A and TOR3A. Interacts with VIM.

It localises to the nucleus inner membrane. Functionally, required for nuclear membrane integrity. Induces TOR1A and TOR1B ATPase activity and is required for their location on the nuclear membrane. Binds to A- and B-type lamins. Possible role in membrane attachment and assembly of the nuclear lamina. The polypeptide is Torsin-1A-interacting protein 1 (TOR1AIP1) (Bos taurus (Bovine)).